The following is a 504-amino-acid chain: D-alanine--D-alanyl carrier protein ligase (504 aa).

152–153 (TS) lines the ATP pocket. Aspartate 197 contacts D-alanine. 292-297 (NTYGPT) is a binding site for ATP. Valine 301 is a binding site for D-alanine. ATP contacts are provided by residues aspartate 383, 394-397 (YNGR), and lysine 492. A D-alanine-binding site is contributed by lysine 492.

This sequence belongs to the ATP-dependent AMP-binding enzyme family. DltA subfamily.

The protein resides in the cytoplasm. It carries out the reaction holo-[D-alanyl-carrier protein] + D-alanine + ATP = D-alanyl-[D-alanyl-carrier protein] + AMP + diphosphate. The protein operates within cell wall biogenesis; lipoteichoic acid biosynthesis. Functionally, catalyzes the first step in the D-alanylation of lipoteichoic acid (LTA), the activation of D-alanine and its transfer onto the D-alanyl carrier protein (Dcp) DltC. In an ATP-dependent two-step reaction, forms a high energy D-alanyl-AMP intermediate, followed by transfer of the D-alanyl residue as a thiol ester to the phosphopantheinyl prosthetic group of the Dcp. D-alanylation of LTA plays an important role in modulating the properties of the cell wall in Gram-positive bacteria, influencing the net charge of the cell wall. The sequence is that of D-alanine--D-alanyl carrier protein ligase from Bacillus cereus (strain AH187).